Reading from the N-terminus, the 144-residue chain is Large ribosomal subunit protein uL13 (144 aa).

The protein belongs to the universal ribosomal protein uL13 family. As to quaternary structure, part of the 50S ribosomal subunit.

Functionally, this protein is one of the early assembly proteins of the 50S ribosomal subunit, although it is not seen to bind rRNA by itself. It is important during the early stages of 50S assembly. In Chloroflexus aurantiacus (strain ATCC 29366 / DSM 635 / J-10-fl), this protein is Large ribosomal subunit protein uL13.